The primary structure comprises 400 residues: Elongation factor Tu (400 aa).

Residues 10–209 (KPHVNVGTIG…AVDSYIPTPE (200 aa)) form the tr-type G domain. The segment at 19–26 (GHVDHGKT) is G1. 19–26 (GHVDHGKT) lines the GTP pocket. Thr26 lines the Mg(2+) pocket. The tract at residues 60-64 (GITIA) is G2. Residues 81 to 84 (DCPG) form a G3 region. GTP-binding positions include 81–85 (DCPGH) and 136–139 (NKVD). The G4 stretch occupies residues 136–139 (NKVD). Positions 174-176 (SAL) are G5.

It belongs to the TRAFAC class translation factor GTPase superfamily. Classic translation factor GTPase family. EF-Tu/EF-1A subfamily. In terms of assembly, monomer.

It localises to the cytoplasm. It carries out the reaction GTP + H2O = GDP + phosphate + H(+). In terms of biological role, GTP hydrolase that promotes the GTP-dependent binding of aminoacyl-tRNA to the A-site of ribosomes during protein biosynthesis. The protein is Elongation factor Tu of Moorella thermoacetica (strain ATCC 39073 / JCM 9320).